The chain runs to 410 residues: Class E basic helix-loop-helix protein 41 (410 aa).

Lys-31 participates in a covalent cross-link: Glycyl lysine isopeptide (Lys-Gly) (interchain with G-Cter in SUMO2). One can recognise a bHLH domain in the interval 44-99 (TYKLPHRLIEKKRRDRINECIAQLKDLLPEHLKLTTLGHLEKAVVLELTLKHLKAL). Lys-121 is covalently cross-linked (Glycyl lysine isopeptide (Lys-Gly) (interchain with G-Cter in SUMO2)). Positions 131-166 (FHSGFQTCAKEVLQYLARFESWTPREPRCAQLVSHL) constitute an Orange domain. 2 disordered regions span residues 209-251 (IQRT…SAAP) and 371-410 (EVAP…KDAP). Lys-240 participates in a covalent cross-link: Glycyl lysine isopeptide (Lys-Gly) (interchain with G-Cter in SUMO2).

In terms of assembly, homodimer. Heterodimer with BHLHE40/DEC1. Interacts with CIART. Interacts with BMAL1 and RXRA. Interacts with NR0B2 and HNF1A. In terms of tissue distribution, highly expressed in the caudate putamen, pineal gland, granular cell layer of the cerebellum, olfactory bulb, piriform cortex, hippocampus and hypothalamic nuclei. Moderately expressed in skeletal muscle, heart. Weakly expressed in lung.

It localises to the nucleus. Its function is as follows. Transcriptional repressor involved in the regulation of the circadian rhythm by negatively regulating the activity of the clock genes and clock-controlled genes. Acts as the negative limb of a novel autoregulatory feedback loop (DEC loop) which differs from the one formed by the PER and CRY transcriptional repressors (PER/CRY loop). Both these loops are interlocked as it represses the expression of PER1 and in turn is repressed by PER1/2 and CRY1/2. Represses the activity of the circadian transcriptional activator: CLOCK-BMAL1 heterodimer by competing for the binding to E-box elements (5'-CACGTG-3') found within the promoters of its target genes. Negatively regulates its own expression and the expression of DBP and BHLHE41/DEC2. Acts as a corepressor of RXR and the RXR-LXR heterodimers and represses the ligand-induced RXRA/B/G, NR1H3/LXRA, NR1H4 and VDR transactivation activity. Inhibits HNF1A-mediated transactivation of CYP1A2, CYP2E1 and CYP3A11. The protein is Class E basic helix-loop-helix protein 41 (Bhlhb3) of Rattus norvegicus (Rat).